The sequence spans 158 residues: Cyclic pyranopterin monophosphate synthase (158 aa).

Substrate is bound by residues 75–77 and 113–114; these read LCH and ME. Residue Asp128 is part of the active site.

It belongs to the MoaC family. Homohexamer; trimer of dimers.

The enzyme catalyses (8S)-3',8-cyclo-7,8-dihydroguanosine 5'-triphosphate = cyclic pyranopterin phosphate + diphosphate. Its pathway is cofactor biosynthesis; molybdopterin biosynthesis. Its function is as follows. Catalyzes the conversion of (8S)-3',8-cyclo-7,8-dihydroguanosine 5'-triphosphate to cyclic pyranopterin monophosphate (cPMP). In Roseiflexus castenholzii (strain DSM 13941 / HLO8), this protein is Cyclic pyranopterin monophosphate synthase.